Consider the following 166-residue polypeptide: uncharacterized protein (166 aa).

4Fe-4S ferredoxin-type domains lie at 3 to 33, 37 to 67, and 68 to 97; these read MKKIIMTNFNCDNCGDCVKACMEKNKVGRIA, KDGKYIPIVCQHCASAPCKEVCPVSAIEHKD, and GYVYLNEDVCIGCGLCALACPFGAILMEDK. The [4Fe-4S] cluster site is built by C13, C16, C19, C23, C46, C49, C54, C58, C77, C80, C83, C87, C101, C104, C111, and C115.

It depends on [4Fe-4S] cluster as a cofactor.

This is an uncharacterized protein from Methanocaldococcus jannaschii (strain ATCC 43067 / DSM 2661 / JAL-1 / JCM 10045 / NBRC 100440) (Methanococcus jannaschii).